A 247-amino-acid polypeptide reads, in one-letter code: 23S rRNA (guanosine-2'-O-)-methyltransferase RlmB (247 aa).

Gly197, Ile217, and Leu226 together coordinate S-adenosyl-L-methionine.

Belongs to the class IV-like SAM-binding methyltransferase superfamily. RNA methyltransferase TrmH family. RlmB subfamily.

It localises to the cytoplasm. It carries out the reaction guanosine(2251) in 23S rRNA + S-adenosyl-L-methionine = 2'-O-methylguanosine(2251) in 23S rRNA + S-adenosyl-L-homocysteine + H(+). Its function is as follows. Specifically methylates the ribose of guanosine 2251 in 23S rRNA. The polypeptide is 23S rRNA (guanosine-2'-O-)-methyltransferase RlmB (Burkholderia sp).